We begin with the raw amino-acid sequence, 312 residues long: MLPAAGLLWWVGALGALYAAVRGALGLLGALRVWGIGAGRAALGPGLGAWAVVTGATDGIGKAYAKELAKRGMKVALISRSKEKLDQVAGEITEQYGVETKVIVADFGEREDIYDRIRAGLEGLEIGVLVNNVGISYSYPEYFIDVPDLDKTIDKMININIMSVCKMTRLVLPGMLERSKGVILNISSAAGMYPTPLLTLYSASKAFVDYFSRGLHAEYKSKGIIVQSVMPYYVATKMSKISKPSFDKPTPETYVRAAIGTVGLQSQTNGCLPHAFMGWVFSILPTSTVMNLLMKTNKQIRARFLKKKMKEK.

The next 3 membrane-spanning stretches (helical) occupy residues 33–53 (VWGIGAGRAALGPGLGAWAVV), 181–201 (GVILNISSAAGMYPTPLLTLY), and 274–294 (HAFMGWVFSILPTSTVMNLLM). 48–77 (GAWAVVTGATDGIGKAYAKELAKRGMKVAL) contacts NADP(+). Substrate is bound at residue Ser-188. The active-site Proton acceptor is Tyr-201.

It belongs to the short-chain dehydrogenases/reductases (SDR) family. 17-beta-HSD 3 subfamily. In terms of tissue distribution, brain.

It localises to the endoplasmic reticulum membrane. It carries out the reaction a very-long-chain (3R)-3-hydroxyacyl-CoA + NADP(+) = a very-long-chain 3-oxoacyl-CoA + NADPH + H(+). The enzyme catalyses 17beta-estradiol + NAD(+) = estrone + NADH + H(+). The catalysed reaction is 17beta-estradiol + NADP(+) = estrone + NADPH + H(+). It catalyses the reaction 3-oxooctadecanoyl-CoA + NADPH + H(+) = (3R)-hydroxyoctadecanoyl-CoA + NADP(+). It carries out the reaction (7Z,10Z,13Z,16Z)-3-oxodocosatetraenoyl-CoA + NADPH + H(+) = (3R)-hydroxy-(7Z,10Z,13Z,16Z)-docosatetraenoyl-CoA + NADP(+). The enzyme catalyses 3-oxo-(7Z,10Z,13Z,16Z,19Z)-docosapentaenoyl-CoA + NADPH + H(+) = (3R)-hydroxy-(7Z,10Z,13Z,16Z,19Z)-docosapentaenoyl-CoA + NADP(+). The catalysed reaction is (8Z,11Z,14Z)-3-oxoeicosatrienoyl-CoA + NADPH + H(+) = (3R)-hydroxy-(8Z,11Z,14Z)-eicosatrienoyl-CoA + NADP(+). The protein operates within lipid metabolism; fatty acid biosynthesis. Its pathway is steroid biosynthesis; estrogen biosynthesis. Catalyzes the second of the four reactions of the long-chain fatty acids elongation cycle. This endoplasmic reticulum-bound enzymatic process, allows the addition of two carbons to the chain of long- and very long-chain fatty acids/VLCFAs per cycle. This enzyme has a 3-ketoacyl-CoA reductase activity, reducing 3-ketoacyl-CoA to 3-hydroxyacyl-CoA, within each cycle of fatty acid elongation. Thereby, it may participate in the production of VLCFAs of different chain lengths that are involved in multiple biological processes as precursors of membrane lipids and lipid mediators. May also catalyze the transformation of estrone (E1) into estradiol (E2) and play a role in estrogen formation. This chain is Very-long-chain 3-oxoacyl-CoA reductase (HSD17B12), found in Anas platyrhynchos (Mallard).